The chain runs to 200 residues: Probable nicotinate-nucleotide adenylyltransferase (200 aa).

Belongs to the NadD family.

The catalysed reaction is nicotinate beta-D-ribonucleotide + ATP + H(+) = deamido-NAD(+) + diphosphate. Its pathway is cofactor biosynthesis; NAD(+) biosynthesis; deamido-NAD(+) from nicotinate D-ribonucleotide: step 1/1. Catalyzes the reversible adenylation of nicotinate mononucleotide (NaMN) to nicotinic acid adenine dinucleotide (NaAD). This Clostridium acetobutylicum (strain ATCC 824 / DSM 792 / JCM 1419 / IAM 19013 / LMG 5710 / NBRC 13948 / NRRL B-527 / VKM B-1787 / 2291 / W) protein is Probable nicotinate-nucleotide adenylyltransferase.